The following is a 133-amino-acid chain: Large ribosomal subunit protein bL12 (133 aa).

This sequence belongs to the bacterial ribosomal protein bL12 family. In terms of assembly, homodimer. Part of the ribosomal stalk of the 50S ribosomal subunit. Forms a multimeric L10(L12)X complex, where L10 forms an elongated spine to which 2 to 4 L12 dimers bind in a sequential fashion. Binds GTP-bound translation factors.

Its function is as follows. Forms part of the ribosomal stalk which helps the ribosome interact with GTP-bound translation factors. Is thus essential for accurate translation. This chain is Large ribosomal subunit protein bL12, found in Trichodesmium erythraeum (strain IMS101).